A 590-amino-acid chain; its full sequence is MGTRPRGVVLAPWAVVLVLVLALRLAGASHVIHRSLEAEAAPSVPASIVSPLLRTGYHFQPPMNWINDPNAPLYYKGWYHLFYQYNPKGAVWGNIVWAHSVSRDLINWVALEPAIYPSIPSDKYGCWSGSATILEDGTPAILYTGIDRADINYQVQVLALPKDASDPLLREWEKPEEYNPVATPAAGGINATQFRDPTTAWRHAGHWRMLVGSVRGARGMALVYRSRDFRKWTKAKHPLHSAALTGMWECPDFFPVSGPGLQAGLDTSAPGTKYVLKSSLDLTRYDYYTIGSYDGGKDRYYPDDPAGDYHHRRRYDYGNYYASKTFYDPVERRRVLLGWANESDSVPDDKAKGWAGIHAIPRKIWLDPTGKQLLQWPIHEVEKLRGKAVSVDAKLVKPGDHFEVTGIATYQADVEVSFELELEAGTSLLEKAEAFDPAYDDDAQKLCGVKGADARGGVGPFGLWVLASADLQERTAVFFRVFRDGHGKPKVLMCTDPTKSSLSPDLYKPTFAGFVDADISSGKITLRSLIDRSVVESFGAGGKTCILSRVYPSIAVGKDAHLYVFNNGEVDVTVSGLTAWEMKKPLMNGA.

The first 28 residues, 1 to 28, serve as a signal peptide directing secretion; it reads MGTRPRGVVLAPWAVVLVLVLALRLAGA. The active site involves Asp-68. N-linked (GlcNAc...) asparagine glycosylation is found at Asn-190 and Asn-341.

Belongs to the glycosyl hydrolase 32 family.

It is found in the secreted. The protein resides in the cell wall. The catalysed reaction is Hydrolysis of terminal non-reducing beta-D-fructofuranoside residues in beta-D-fructofuranosides.. The polypeptide is Beta-fructofuranosidase, cell wall isozyme (Zea mays (Maize)).